A 489-amino-acid polypeptide reads, in one-letter code: Cytochrome P450-DIT2 (489 aa).

Cys435 is a binding site for heme.

Belongs to the cytochrome P450 family. Heme is required as a cofactor.

In terms of biological role, involved in spore wall maturation. Thought to catalyze the oxidation of tyrosine residues in the formation of LL-dityrosine a precursor of the spore wall. In Saccharomyces cerevisiae (strain ATCC 204508 / S288c) (Baker's yeast), this protein is Cytochrome P450-DIT2 (DIT2).